A 248-amino-acid polypeptide reads, in one-letter code: Octanoyltransferase (248 aa).

Residues 53–238 (ADTGDEIWVV…NLDGASAAAD (186 aa)) form the BPL/LPL catalytic domain. Substrate-binding positions include 93-100 (RGGQITYH), 165-167 (ALG), and 178-180 (GLS). Cysteine 196 serves as the catalytic Acyl-thioester intermediate.

This sequence belongs to the LipB family.

It localises to the cytoplasm. It catalyses the reaction octanoyl-[ACP] + L-lysyl-[protein] = N(6)-octanoyl-L-lysyl-[protein] + holo-[ACP] + H(+). Its pathway is protein modification; protein lipoylation via endogenous pathway; protein N(6)-(lipoyl)lysine from octanoyl-[acyl-carrier-protein]: step 1/2. In terms of biological role, catalyzes the transfer of endogenously produced octanoic acid from octanoyl-acyl-carrier-protein onto the lipoyl domains of lipoate-dependent enzymes. Lipoyl-ACP can also act as a substrate although octanoyl-ACP is likely to be the physiological substrate. The protein is Octanoyltransferase of Burkholderia orbicola (strain MC0-3).